Consider the following 513-residue polypeptide: Voltage-gated potassium channel regulatory subunit KCNG1 (513 aa).

The Cytoplasmic portion of the chain corresponds to 1-224 (MTLLPGDNSD…DMVERPHSGL (224 aa)). Positions 184–204 (EEDDALDSEGRDSEGPAEGEG) are disordered. A compositionally biased stretch (basic and acidic residues) spans 191–204 (SEGRDSEGPAEGEG). Residues 225–246 (PGKVFACLSVLFVTVTAVNLSV) form a helical membrane-spanning segment. The Extracellular segment spans residues 247–267 (STLPSLREEEEQGHCSQMCHN). A helical transmembrane segment spans residues 268 to 289 (VFIVESVCVGWFSLEFLLRLIQ). The Cytoplasmic segment spans residues 290-300 (APSKFAFLRSP). Residues 301-321 (LTLIDLVAILPYYITLLVDGA) form a helical membrane-spanning segment. Residues 322 to 338 (AAGRRKPGAGNSYLDKV) lie on the Extracellular side of the membrane. The helical; Voltage-sensor transmembrane segment at 339 to 359 (GLVLRVLRALRILYVMRLARH) threads the bilayer. The Cytoplasmic portion of the chain corresponds to 360–374 (SLGLQTLGLTARRCT). The chain crosses the membrane as a helical span at residues 375 to 396 (REFGLLLLFLCVAIALFAPLLY). Residues 397–411 (VIENEMADSPEFTSI) are Extracellular-facing. An intramembrane region (helical) is located at residues 412–423 (PACYWWAVITMT). A Selectivity filter motif is present at residues 424-429 (TVGYGD). An intramembrane segment occupies 424–431 (TVGYGDMV). At 432–438 (PRSTPGQ) the chain is on the extracellular side. The helical transmembrane segment at 439 to 467 (VVALSSILSGILLMAFPVTSIFHTFSRSY) threads the bilayer. At 468-513 (LELKQEQERVMFRRAQFLIKTKSQLSVSQDSDILFGSASSDTRDNN) the chain is on the cytoplasmic side.

Belongs to the potassium channel family. G (TC 1.A.1.2) subfamily. Kv6.1/KCNG1 sub-subfamily. In terms of assembly, heterotetramer with KCNB1. Heterotetramer with KCNB2. As to expression, expressed in brain and placenta, and at much lower levels in kidney and pancreas.

The protein localises to the cell membrane. Regulatory alpha-subunit of the voltage-gated potassium (Kv) channel which, when coassembled with KCNB1 or KCNB2, can modulate their expression and their gating kinetics by acting on deactivation upon repolarization and inactivation during maintained depolarization. Potassium channel subunit that does not form functional channels by itself. This Homo sapiens (Human) protein is Voltage-gated potassium channel regulatory subunit KCNG1.